A 170-amino-acid chain; its full sequence is Allophycocyanin subunit beta-18 (170 aa).

Asn-74 carries the N4-methylasparagine modification. Cys-84 contacts (2R,3E)-phycocyanobilin.

This sequence belongs to the phycobiliprotein family. As to quaternary structure, heterodimer of an alpha and a beta chain. In terms of processing, contains one covalently linked bilin chromophore.

The protein resides in the plastid. It localises to the chloroplast thylakoid membrane. Its function is as follows. Light-harvesting photosynthetic bile pigment-protein from the phycobiliprotein complex. Allophycocyanin has a maximum absorption at approximately 650 nanometers. This Cyanidium caldarium (Red alga) protein is Allophycocyanin subunit beta-18 (apcF).